A 107-amino-acid chain; its full sequence is uncharacterized protein (107 aa).

The helical transmembrane segment at 52–72 threads the bilayer; the sequence is LIIHDLFIYIFILNFFFFPFC.

Its subcellular location is the membrane. This is an uncharacterized protein from Saccharomyces cerevisiae (strain ATCC 204508 / S288c) (Baker's yeast).